Reading from the N-terminus, the 291-residue chain is N-acetylmannosamine kinase (291 aa).

Residues 5–12 (AIDIGGTK) and 132–139 (GVGGGVVC) contribute to the ATP site. Zn(2+)-binding residues include histidine 156, cysteine 166, cysteine 168, and cysteine 173.

This sequence belongs to the ROK (NagC/XylR) family. NanK subfamily. As to quaternary structure, homodimer.

It carries out the reaction an N-acyl-D-mannosamine + ATP = an N-acyl-D-mannosamine 6-phosphate + ADP + H(+). It functions in the pathway amino-sugar metabolism; N-acetylneuraminate degradation; D-fructose 6-phosphate from N-acetylneuraminate: step 2/5. Functionally, catalyzes the phosphorylation of N-acetylmannosamine (ManNAc) to ManNAc-6-P. The sequence is that of N-acetylmannosamine kinase from Salmonella arizonae (strain ATCC BAA-731 / CDC346-86 / RSK2980).